The following is a 267-amino-acid chain: Type III pantothenate kinase (267 aa).

6-13 (DSGNSRLK) is an ATP binding site. Residues Y96 and 103–106 (GADR) contribute to the substrate site. The active-site Proton acceptor is D105. Position 131 (T131) interacts with ATP. T181 lines the substrate pocket.

The protein belongs to the type III pantothenate kinase family. In terms of assembly, homodimer. The cofactor is NH4(+). K(+) is required as a cofactor.

It localises to the cytoplasm. The catalysed reaction is (R)-pantothenate + ATP = (R)-4'-phosphopantothenate + ADP + H(+). It functions in the pathway cofactor biosynthesis; coenzyme A biosynthesis; CoA from (R)-pantothenate: step 1/5. Catalyzes the phosphorylation of pantothenate (Pan), the first step in CoA biosynthesis. Functionally, activates transcription of the pertussis toxin operon in a BvgAS-dependent manner. May interact with the alpha subunit of RNA polymerase. The sequence is that of Type III pantothenate kinase (coaX) from Bordetella pertussis (strain Tohama I / ATCC BAA-589 / NCTC 13251).